A 295-amino-acid chain; its full sequence is 4-diphosphocytidyl-2-C-methyl-D-erythritol kinase (295 aa).

Residue Lys18 is part of the active site. Residue 101–111 (PMGGGIGGGSS) participates in ATP binding. Asp143 is a catalytic residue.

The protein belongs to the GHMP kinase family. IspE subfamily.

The enzyme catalyses 4-CDP-2-C-methyl-D-erythritol + ATP = 4-CDP-2-C-methyl-D-erythritol 2-phosphate + ADP + H(+). The protein operates within isoprenoid biosynthesis; isopentenyl diphosphate biosynthesis via DXP pathway; isopentenyl diphosphate from 1-deoxy-D-xylulose 5-phosphate: step 3/6. Functionally, catalyzes the phosphorylation of the position 2 hydroxy group of 4-diphosphocytidyl-2C-methyl-D-erythritol. This is 4-diphosphocytidyl-2-C-methyl-D-erythritol kinase from Vibrio vulnificus (strain YJ016).